The sequence spans 299 residues: Small ribosomal subunit biogenesis GTPase RsgA (299 aa).

A CP-type G domain is found at 64–225; it reads KNEMIRPPVA…VGDTPGFSSL (162 aa). Residues 113–116 and 168–176 contribute to the GTP site; these read TKTD and GQTGAGKST. Cys-249, Cys-254, His-256, and Cys-262 together coordinate Zn(2+).

The protein belongs to the TRAFAC class YlqF/YawG GTPase family. RsgA subfamily. Monomer. Associates with 30S ribosomal subunit, binds 16S rRNA. Requires Zn(2+) as cofactor.

It is found in the cytoplasm. One of several proteins that assist in the late maturation steps of the functional core of the 30S ribosomal subunit. Helps release RbfA from mature subunits. May play a role in the assembly of ribosomal proteins into the subunit. Circularly permuted GTPase that catalyzes slow GTP hydrolysis, GTPase activity is stimulated by the 30S ribosomal subunit. The polypeptide is Small ribosomal subunit biogenesis GTPase RsgA (Latilactobacillus sakei subsp. sakei (strain 23K) (Lactobacillus sakei subsp. sakei)).